Reading from the N-terminus, the 327-residue chain is Annexin A8 (327 aa).

Annexin repeat units lie at residues 21 to 92 (FNPD…ALMY), 93 to 164 (PPYR…CLLQ), 177 to 249 (GLAL…TVVK), and 253 to 324 (NLHG…NLVG). Residues M266, G268, G270, and D310 each coordinate Ca(2+).

It belongs to the annexin family.

Its function is as follows. This protein is an anticoagulant protein that acts as an indirect inhibitor of the thromboplastin-specific complex, which is involved in the blood coagulation cascade. The polypeptide is Annexin A8 (ANXA8) (Bos taurus (Bovine)).